Here is a 396-residue protein sequence, read N- to C-terminus: Tryptophan synthase beta chain (396 aa).

Lys-86 carries the N6-(pyridoxal phosphate)lysine modification.

Belongs to the TrpB family. In terms of assembly, tetramer of two alpha and two beta chains. It depends on pyridoxal 5'-phosphate as a cofactor.

It catalyses the reaction (1S,2R)-1-C-(indol-3-yl)glycerol 3-phosphate + L-serine = D-glyceraldehyde 3-phosphate + L-tryptophan + H2O. The protein operates within amino-acid biosynthesis; L-tryptophan biosynthesis; L-tryptophan from chorismate: step 5/5. Functionally, the beta subunit is responsible for the synthesis of L-tryptophan from indole and L-serine. The chain is Tryptophan synthase beta chain from Vibrio campbellii (strain ATCC BAA-1116).